Consider the following 716-residue polypeptide: 1,4-alpha-glucan branching enzyme GlgB (716 aa).

Catalysis depends on aspartate 398, which acts as the Nucleophile. Glutamate 451 functions as the Proton donor in the catalytic mechanism.

Belongs to the glycosyl hydrolase 13 family. GlgB subfamily. Monomer.

It carries out the reaction Transfers a segment of a (1-&gt;4)-alpha-D-glucan chain to a primary hydroxy group in a similar glucan chain.. It participates in glycan biosynthesis; glycogen biosynthesis. Catalyzes the formation of the alpha-1,6-glucosidic linkages in glycogen by scission of a 1,4-alpha-linked oligosaccharide from growing alpha-1,4-glucan chains and the subsequent attachment of the oligosaccharide to the alpha-1,6 position. This Nitrobacter winogradskyi (strain ATCC 25391 / DSM 10237 / CIP 104748 / NCIMB 11846 / Nb-255) protein is 1,4-alpha-glucan branching enzyme GlgB.